The chain runs to 108 residues: uncharacterized protein (108 aa).

Over residues 1-15 (MSDSNSRLVYSTQTG) the composition is skewed to polar residues. A disordered region spans residues 1-29 (MSDSNSRLVYSTQTGRIEEPKTAPVRPKG). Residues 16–29 (RIEEPKTAPVRPKG) show a composition bias toward basic and acidic residues.

This sequence belongs to the SUI1 family.

This is an uncharacterized protein from Salmonella typhi.